The primary structure comprises 309 residues: ADP-L-glycero-D-manno-heptose-6-epimerase (309 aa).

NADP(+)-binding positions include 10-11 (FI), 31-32 (DN), K38, K53, 75-79 (LGACS), and N92. Y140 (proton acceptor) is an active-site residue. K144 provides a ligand contact to NADP(+). N169 is a binding site for substrate. NADP(+) is bound by residues V170 and K178. K178 (proton acceptor) is an active-site residue. Substrate-binding positions include S180, H187, 201 to 204 (FLGS), R209, and Y272.

This sequence belongs to the NAD(P)-dependent epimerase/dehydratase family. HldD subfamily. Homopentamer. The cofactor is NADP(+).

The catalysed reaction is ADP-D-glycero-beta-D-manno-heptose = ADP-L-glycero-beta-D-manno-heptose. It participates in nucleotide-sugar biosynthesis; ADP-L-glycero-beta-D-manno-heptose biosynthesis; ADP-L-glycero-beta-D-manno-heptose from D-glycero-beta-D-manno-heptose 7-phosphate: step 4/4. In terms of biological role, catalyzes the interconversion between ADP-D-glycero-beta-D-manno-heptose and ADP-L-glycero-beta-D-manno-heptose via an epimerization at carbon 6 of the heptose. In Hamiltonella defensa subsp. Acyrthosiphon pisum (strain 5AT), this protein is ADP-L-glycero-D-manno-heptose-6-epimerase.